Reading from the N-terminus, the 151-residue chain is Transcription factor ATOH7 (151 aa).

A bHLH domain is found at 39–91 (KRRLAANARERRRMQGLNTAFDRLRKVVPQWGQDKKLSKYETLQMALSYIMAL).

The protein localises to the nucleus. Its subcellular location is the perikaryon. It is found in the cell projection. The protein resides in the axon. In terms of biological role, transcription factor that binds to DNA at the consensus sequence 5'-CAG[GC]TG-3'. Positively regulates the determination of retinal ganglion cell fate and formation of the optic nerve and retino-hypothalamic tract. Required for retinal circadian rhythm photoentrainment. Plays a role in brainstem auditory signaling and binaural processing. During retinal neurogenesis, activates its own transcription, as well as the transcription of CHRNB3 and BRN3. This Gallus gallus (Chicken) protein is Transcription factor ATOH7.